Here is a 1176-residue protein sequence, read N- to C-terminus: DNA-directed RNA polymerase subunit beta (1176 aa).

Positions 13 to 30 (TDASLHQGRPQSSSNSSV) are enriched in polar residues. Residues 13-35 (TDASLHQGRPQSSSNSSVPGAPN) form a disordered region.

It belongs to the RNA polymerase beta chain family. The RNAP catalytic core consists of 2 alpha, 1 beta, 1 beta' and 1 omega subunit. When a sigma factor is associated with the core the holoenzyme is formed, which can initiate transcription.

It catalyses the reaction RNA(n) + a ribonucleoside 5'-triphosphate = RNA(n+1) + diphosphate. In terms of biological role, DNA-dependent RNA polymerase catalyzes the transcription of DNA into RNA using the four ribonucleoside triphosphates as substrates. In Mycobacterium ulcerans (strain Agy99), this protein is DNA-directed RNA polymerase subunit beta.